Consider the following 811-residue polypeptide: Ribosome biogenesis protein ERB1 (811 aa).

The span at 1–11 (MARNSKATDTP) shows a compositional bias: polar residues. The tract at residues 1 to 138 (MARNSKATDT…VHTKFSDGRP (138 aa)) is disordered. The segment covering 27 to 96 (EDAEESSSDE…LSDVDSEEFS (70 aa)) has biased composition (acidic residues). Over residues 104–121 (ASITDKLSGTKIRSYSNA) the composition is skewed to polar residues. The segment covering 128-138 (EVHTKFSDGRP) has biased composition (basic and acidic residues). Residues 270 to 386 (RFVPSKHEAK…LRKVPGYQEG (117 aa)) are required for interaction with NOP7. A required for interaction with YTM1 region spans residues 386–422 (GLRERFERCLDLYLAPRTRHNKLNIDPDSLIPELPSP). WD repeat units lie at residues 438-477 (GHTE…QVYK) and 485-525 (NTDD…FDIE). Positions 547–566 (TKNSNIKVNSDDEDEEVEKA) are disordered. WD repeat units follow at residues 595 to 637 (QCRK…SQSP), 640 to 678 (KSKG…LVKK), 681 to 720 (PGAR…TPYK), 724 to 764 (YHDK…DLMT), and 780 to 811 (INSL…LWTT).

This sequence belongs to the WD repeat BOP1/ERB1 family. Component of the NOP7 complex, composed of ERB1, NOP7 and YTM1. The complex is held together by ERB1, which interacts with NOP7 via its N-terminal domain and with YTM1 via a high-affinity interaction between the seven-bladed beta-propeller domains of the 2 proteins. The NOP7 complex associates with the 66S pre-ribosome.

The protein resides in the nucleus. Its subcellular location is the nucleolus. It is found in the nucleoplasm. Its function is as follows. Component of the NOP7 complex, which is required for maturation of the 25S and 5.8S ribosomal RNAs and formation of the 60S ribosome. The chain is Ribosome biogenesis protein ERB1 from Debaryomyces hansenii (strain ATCC 36239 / CBS 767 / BCRC 21394 / JCM 1990 / NBRC 0083 / IGC 2968) (Yeast).